The chain runs to 192 residues: UPF0149 protein KPK_0755 (192 aa).

The protein belongs to the UPF0149 family.

This Klebsiella pneumoniae (strain 342) protein is UPF0149 protein KPK_0755.